The sequence spans 602 residues: Elongation factor 4 (602 aa).

Positions 6 to 188 constitute a tr-type G domain; the sequence is DHIRNFSIVA…AIVNKLPAPK (183 aa). GTP-binding positions include 18–23 and 135–138; these read DHGKST and NKID.

Belongs to the TRAFAC class translation factor GTPase superfamily. Classic translation factor GTPase family. LepA subfamily.

It localises to the cell inner membrane. The enzyme catalyses GTP + H2O = GDP + phosphate + H(+). Its function is as follows. Required for accurate and efficient protein synthesis under certain stress conditions. May act as a fidelity factor of the translation reaction, by catalyzing a one-codon backward translocation of tRNAs on improperly translocated ribosomes. Back-translocation proceeds from a post-translocation (POST) complex to a pre-translocation (PRE) complex, thus giving elongation factor G a second chance to translocate the tRNAs correctly. Binds to ribosomes in a GTP-dependent manner. The sequence is that of Elongation factor 4 from Brucella suis (strain ATCC 23445 / NCTC 10510).